Consider the following 381-residue polypeptide: Dual-specificity RNA methyltransferase RlmN (381 aa).

Glu-96 (proton acceptor) is an active-site residue. The Radical SAM core domain occupies 102 to 342 (TDDRGTLCVS…TRTTRGDDID (241 aa)). Cys-109 and Cys-345 are oxidised to a cystine. [4Fe-4S] cluster contacts are provided by Cys-116, Cys-120, and Cys-123. S-adenosyl-L-methionine-binding positions include 170 to 171 (GE), Ser-202, 224 to 226 (SLH), and Asn-302. The active-site S-methylcysteine intermediate is Cys-345.

This sequence belongs to the radical SAM superfamily. RlmN family. The cofactor is [4Fe-4S] cluster.

Its subcellular location is the cytoplasm. The catalysed reaction is adenosine(2503) in 23S rRNA + 2 reduced [2Fe-2S]-[ferredoxin] + 2 S-adenosyl-L-methionine = 2-methyladenosine(2503) in 23S rRNA + 5'-deoxyadenosine + L-methionine + 2 oxidized [2Fe-2S]-[ferredoxin] + S-adenosyl-L-homocysteine. The enzyme catalyses adenosine(37) in tRNA + 2 reduced [2Fe-2S]-[ferredoxin] + 2 S-adenosyl-L-methionine = 2-methyladenosine(37) in tRNA + 5'-deoxyadenosine + L-methionine + 2 oxidized [2Fe-2S]-[ferredoxin] + S-adenosyl-L-homocysteine. Specifically methylates position 2 of adenine 2503 in 23S rRNA and position 2 of adenine 37 in tRNAs. m2A2503 modification seems to play a crucial role in the proofreading step occurring at the peptidyl transferase center and thus would serve to optimize ribosomal fidelity. This is Dual-specificity RNA methyltransferase RlmN from Pseudomonas putida (strain ATCC 700007 / DSM 6899 / JCM 31910 / BCRC 17059 / LMG 24140 / F1).